Reading from the N-terminus, the 274-residue chain is 2-dehydro-3-deoxyphosphooctonate aldolase (274 aa).

The protein belongs to the KdsA family.

Its subcellular location is the cytoplasm. The catalysed reaction is D-arabinose 5-phosphate + phosphoenolpyruvate + H2O = 3-deoxy-alpha-D-manno-2-octulosonate-8-phosphate + phosphate. Its pathway is carbohydrate biosynthesis; 3-deoxy-D-manno-octulosonate biosynthesis; 3-deoxy-D-manno-octulosonate from D-ribulose 5-phosphate: step 2/3. It participates in bacterial outer membrane biogenesis; lipopolysaccharide biosynthesis. This is 2-dehydro-3-deoxyphosphooctonate aldolase from Rickettsia conorii (strain ATCC VR-613 / Malish 7).